Consider the following 243-residue polypeptide: Carboxy-S-adenosyl-L-methionine synthase (243 aa).

S-adenosyl-L-methionine contacts are provided by residues Tyr40, 65–67 (GCS), 90–91 (DN), 118–119 (DI), Asn133, and Arg200.

It belongs to the class I-like SAM-binding methyltransferase superfamily. Cx-SAM synthase family. Homodimer.

The catalysed reaction is prephenate + S-adenosyl-L-methionine = carboxy-S-adenosyl-L-methionine + 3-phenylpyruvate + H2O. Its function is as follows. Catalyzes the conversion of S-adenosyl-L-methionine (SAM) to carboxy-S-adenosyl-L-methionine (Cx-SAM). The polypeptide is Carboxy-S-adenosyl-L-methionine synthase (Shewanella sp. (strain W3-18-1)).